The chain runs to 197 residues: Dephospho-CoA kinase (197 aa).

The DPCK domain occupies 3–197 (ILGLTGSIAM…TGCLVGQGSR (195 aa)). Residue 11–16 (AMGKST) participates in ATP binding.

Belongs to the CoaE family.

It localises to the cytoplasm. It catalyses the reaction 3'-dephospho-CoA + ATP = ADP + CoA + H(+). The protein operates within cofactor biosynthesis; coenzyme A biosynthesis; CoA from (R)-pantothenate: step 5/5. In terms of biological role, catalyzes the phosphorylation of the 3'-hydroxyl group of dephosphocoenzyme A to form coenzyme A. The chain is Dephospho-CoA kinase from Zymomonas mobilis subsp. mobilis (strain ATCC 31821 / ZM4 / CP4).